The following is a 109-amino-acid chain: Hainantoxin-XVIII (109 aa).

Residues methionine 1–alanine 18 form the signal peptide. Positions phenylalanine 19–alanine 46 are excised as a propeptide. 4 cysteine pairs are disulfide-bonded: cysteine 47–cysteine 62, cysteine 55–cysteine 68, cysteine 59–cysteine 108, and cysteine 61–cysteine 81.

This sequence belongs to the neurotoxin 25 family. F7 subfamily. In terms of tissue distribution, expressed by the venom gland.

It is found in the secreted. Putative ion channel inhibitor. The protein is Hainantoxin-XVIII of Cyriopagopus hainanus (Chinese bird spider).